The following is a 101-amino-acid chain: Small ribosomal subunit protein bS18c (101 aa).

Belongs to the bacterial ribosomal protein bS18 family. As to quaternary structure, part of the 30S ribosomal subunit.

The protein localises to the plastid. It is found in the chloroplast. The sequence is that of Small ribosomal subunit protein bS18c from Citrus sinensis (Sweet orange).